The chain runs to 101 residues: Urease subunit beta (101 aa).

Belongs to the urease beta subunit family. In terms of assembly, heterotrimer of UreA (gamma), UreB (beta) and UreC (alpha) subunits. Three heterotrimers associate to form the active enzyme.

The protein localises to the cytoplasm. The enzyme catalyses urea + 2 H2O + H(+) = hydrogencarbonate + 2 NH4(+). The protein operates within nitrogen metabolism; urea degradation; CO(2) and NH(3) from urea (urease route): step 1/1. This Pseudomonas fluorescens (strain SBW25) protein is Urease subunit beta.